The primary structure comprises 109 residues: MVSRKRNSVIYRFASLLLVLMLSACSALQGTPQPAPPVTDHPQEIRRDQTQGLQRIGSVSTMVRGSPDDALAEIKAKAVAAKADYYVVVMVDETIVTGQWYSQAILYRK.

Positions 1–24 are cleaved as a signal peptide; that stretch reads MVSRKRNSVIYRFASLLLVLMLSA. Residue Cys-25 is the site of N-palmitoyl cysteine attachment. Residue Cys-25 is the site of S-diacylglycerol cysteine attachment.

The protein belongs to the BhsA/McbA family.

It is found in the cell membrane. Functionally, involved in protection of biofilms against oxidative stress. The sequence is that of Lipoprotein BsmA (bsmA) from Escherichia coli (strain K12).